We begin with the raw amino-acid sequence, 328 residues long: tRNA uridine(34) hydroxylase (328 aa).

The 95-residue stretch at 130-224 folds into the Rhodanese domain; that stretch reads LDKDTVVLDT…YGKDPEVQGE (95 aa). The Cysteine persulfide intermediate role is filled by cysteine 184.

The protein belongs to the TrhO family.

It carries out the reaction uridine(34) in tRNA + AH2 + O2 = 5-hydroxyuridine(34) in tRNA + A + H2O. Catalyzes oxygen-dependent 5-hydroxyuridine (ho5U) modification at position 34 in tRNAs. The chain is tRNA uridine(34) hydroxylase from Streptococcus pneumoniae (strain Taiwan19F-14).